Reading from the N-terminus, the 1889-residue chain is Vacuolar membrane-associated protein IML1 (1889 aa).

Disordered stretches follow at residues 1–74 (MPPP…SRLR), 515–540 (QPGQ…TLTF), 551–570 (SPNK…PLSS), 716–808 (ARLP…LKAP), 838–900 (AGAS…DSPT), and 1252–1272 (PPNE…DTNP). A compositionally biased stretch (polar residues) spans 47–60 (YSNSPGDTVSSNST). Residues 729 to 742 (RCRDHEETPRRQAL) are compositionally biased toward basic and acidic residues. 3 stretches are compositionally biased toward polar residues: residues 747–766 (PLGT…QTLP), 787–804 (KSMS…SSSP), and 840–853 (ASKT…SQDL). Low complexity predominate over residues 865 to 877 (SSSRRLTGGTSTS). Residues 1331 to 1417 (ENGGVRMQNR…DGQYFYQISN (87 aa)) form the DEP domain. 2 disordered regions span residues 1424–1484 (PPGW…GNKP) and 1724–1824 (PTPL…WSTW). Low complexity-rich tracts occupy residues 1737–1789 (SPAL…PGLT) and 1801–1811 (PSTSATTTTAC).

This sequence belongs to the IML1 family.

Its subcellular location is the vacuole membrane. The polypeptide is Vacuolar membrane-associated protein IML1 (IML1) (Chaetomium globosum (strain ATCC 6205 / CBS 148.51 / DSM 1962 / NBRC 6347 / NRRL 1970) (Soil fungus)).